The sequence spans 396 residues: GTPase Obg (396 aa).

One can recognise an Obg domain in the interval 1–159; it reads MKFVDEATIY…RNIRLELKVL (159 aa). An OBG-type G domain is found at 160-333; it reads ADVGLLGLPN…LCQDIMTWIE (174 aa). GTP contacts are provided by residues 166–173, 191–195, 213–216, 283–286, and 314–316; these read GLPNAGKS, FTTLV, DIPG, NKTD, and SAL. Mg(2+) is bound by residues S173 and T193. 2 disordered regions span residues 337 to 356 and 373 to 396; these read EEER…REQM and LARK…FYAP. The segment covering 347-356 has biased composition (basic and acidic residues); the sequence is EADRLNREQM. The span at 381 to 396 shows a compositional bias: acidic residues; that stretch reads SDDDDDDEDVEVFYAP.

The protein belongs to the TRAFAC class OBG-HflX-like GTPase superfamily. OBG GTPase family. In terms of assembly, monomer. Requires Mg(2+) as cofactor.

It localises to the cytoplasm. Functionally, an essential GTPase which binds GTP, GDP and possibly (p)ppGpp with moderate affinity, with high nucleotide exchange rates and a fairly low GTP hydrolysis rate. Plays a role in control of the cell cycle, stress response, ribosome biogenesis and in those bacteria that undergo differentiation, in morphogenesis control. The chain is GTPase Obg from Hahella chejuensis (strain KCTC 2396).